The sequence spans 593 residues: Methionine--tRNA ligase, mitochondrial (593 aa).

A mitochondrion-targeting transit peptide spans 1–29 (MLRVSAFRLLGRRGASRVSLLEDFSFRYY). The 'HIGH' region signature appears at 52-62 (FYVNAAPHIGH). A 'KMSKS' region motif is present at residues 347–351 (KMSKS). Position 350 (Lys350) interacts with ATP.

It belongs to the class-I aminoacyl-tRNA synthetase family.

The protein localises to the mitochondrion matrix. It carries out the reaction tRNA(Met) + L-methionine + ATP = L-methionyl-tRNA(Met) + AMP + diphosphate. This Bos taurus (Bovine) protein is Methionine--tRNA ligase, mitochondrial (MARS2).